The following is a 130-amino-acid chain: Small ribosomal subunit protein uS8 (130 aa).

Belongs to the universal ribosomal protein uS8 family. Part of the 30S ribosomal subunit. Contacts proteins S5 and S12.

One of the primary rRNA binding proteins, it binds directly to 16S rRNA central domain where it helps coordinate assembly of the platform of the 30S subunit. In Salmonella arizonae (strain ATCC BAA-731 / CDC346-86 / RSK2980), this protein is Small ribosomal subunit protein uS8.